The sequence spans 841 residues: Phosphatidylglycerol lysyltransferase (841 aa).

Topologically, residues 1 to 8 are cytoplasmic; it reads MTKELRSK. A helical transmembrane segment spans residues 9–29; sequence LFTILKIAFALTLFTIVAITL. The Extracellular portion of the chain corresponds to 30–52; sequence YKELSHINLKDAIKSFSKINRFW. Residues 53-73 form a helical membrane-spanning segment; the sequence is LVALFLSGGASIIVLSIYDVI. The Cytoplasmic portion of the chain corresponds to 74–89; it reads LAKTLKLKIGLAKTIR. The helical transmembrane segment at 90–110 threads the bilayer; it reads IGYIVNALNAVVGFGGFIGAS. Over 111-129 the chain is Extracellular; that stretch reads VRFLFYKNTTDDKKALFHT. A helical transmembrane segment spans residues 130–150; sequence ISIVLISMLTGLSLLSILVVI. Over 151–164 the chain is Cytoplasmic; sequence HVFDISHIFTPYPW. Residues 165 to 185 traverse the membrane as a helical segment; it reads VKWLMYVVALFLPIFVVFTII. Residues 186 to 193 lie on the Extracellular side of the membrane; sequence KPVQKTHR. Residues 194 to 216 traverse the membrane as a helical segment; the sequence is LLGVYCTIVSGVEWFVAALVLYM. At 217-229 the chain is on the cytoplasmic side; that stretch reads SMAIVGVQIPFAT. Residues 230–250 form a helical membrane-spanning segment; that stretch reads FMGIFILAALSGLISFIPGGF. At 251–270 the chain is on the extracellular side; sequence GTFDLVVLLGLKALNVNEEA. Residues 271-291 traverse the membrane as a helical segment; that stretch reads IVLGLSLYRFAYYLFPVLIAL. Topologically, residues 292 to 336 are cytoplasmic; the sequence is ILSTFEFRSTAKRYWEDSRILVPVKDMTSLLGSYQKDIIARIPSF. A helical transmembrane segment spans residues 337-357; it reads AIALLLLFTSLVFFLNNLTII. At 358 to 367 the chain is on the extracellular side; that stretch reads YDGLYDPNHY. Residues 368-388 form a helical membrane-spanning segment; the sequence is IYYIIVSIHTCACLLLLLNVI. Residues 389–392 lie on the Cytoplasmic side of the membrane; the sequence is GVYK. Residues 393 to 413 traverse the membrane as a helical segment; sequence LSKRAILFSIISVLFIFIATA. The Extracellular portion of the chain corresponds to 414-415; that stretch reads YT. Residues 416–436 form a helical membrane-spanning segment; the sequence is YASFILLSWLTVIFILLLVFY. The Cytoplasmic portion of the chain corresponds to 437–448; the sequence is RRARVIKRPFRY. A helical transmembrane segment spans residues 449–469; the sequence is SKLLLSVITGAIILYINHLVI. At 470–489 the chain is on the extracellular side; the sequence is KSTFYSLEIYHIEMLTSILR. Residues 490–510 form a helical membrane-spanning segment; that stretch reads YYFWITILLVAIIVGVIVWWF. Residues 511–841 are Cytoplasmic-facing; that stretch reads EYRYRSSNSR…KVMRVIRKNN (331 aa).

This sequence belongs to the LPG synthase family.

The protein localises to the cell membrane. It carries out the reaction L-lysyl-tRNA(Lys) + a 1,2-diacyl-sn-glycero-3-phospho-(1'-sn-glycerol) = a 1,2-diacyl-sn-glycero-3-phospho-1'-(3'-O-L-lysyl)-sn-glycerol + tRNA(Lys). Catalyzes the transfer of a lysyl group from L-lysyl-tRNA(Lys) to membrane-bound phosphatidylglycerol (PG), which produces lysylphosphatidylglycerol (LPG), a major component of the bacterial membrane with a positive net charge. LPG synthesis contributes to bacterial virulence as it is involved in the resistance mechanism against cationic antimicrobial peptides (CAMP) produces by the host's immune system (defensins, cathelicidins) and by the competing microorganisms (bacteriocins). In fact, the modification of anionic phosphatidylglycerol with positively charged L-lysine results in repulsion of the peptides. The chain is Phosphatidylglycerol lysyltransferase (mprF) from Staphylococcus xylosus.